A 130-amino-acid polypeptide reads, in one-letter code: MYRAITRNIQVTATPRYVAERSEPDQGRHFWAYTVEVANLGQETVQLKGRHWVITDANGHTEEVHGAGVVGEEPTLPPGGRFEYTSGVPLNTSTGIMSGHYEMLADNGETFSIEIPAFSLDVPDVRRVLN.

Residues 3–127 (RAITRNIQVT…FSLDVPDVRR (125 aa)) form the ApaG domain.

The protein is Protein ApaG of Xanthobacter autotrophicus (strain ATCC BAA-1158 / Py2).